A 253-amino-acid chain; its full sequence is A-type ATP synthase subunit B (253 aa).

This sequence belongs to the ATPase alpha/beta chains family. Has multiple subunits with at least A(3), B(3), C, D, E, F, H, I and proteolipid K(x).

It localises to the cell membrane. Its function is as follows. Component of the A-type ATP synthase that produces ATP from ADP in the presence of a proton gradient across the membrane. The B chain is a regulatory subunit. The protein is A-type ATP synthase subunit B of Methanothermococcus thermolithotrophicus (Methanococcus thermolithotrophicus).